The following is a 236-amino-acid chain: Peptidyl-prolyl cis-trans isomerase CYP21-4 (236 aa).

The chain crosses the membrane as a helical; Signal-anchor for type II membrane protein span at residues 22-42 (ISISTIIVCNLVVAVVILSLV). Residues 52-71 (SRNTIEHETRSQRFEDTNTA) are disordered. Residues 54–67 (NTIEHETRSQRFED) are compositionally biased toward basic and acidic residues. Positions 82–232 (FADINTSKGL…SPIGITGVVL (151 aa)) constitute a PPIase cyclophilin-type domain. Residue Asn86 is glycosylated (N-linked (GlcNAc...) asparagine).

It belongs to the cyclophilin-type PPIase family. As to expression, ubiquitous.

The protein resides in the membrane. The enzyme catalyses [protein]-peptidylproline (omega=180) = [protein]-peptidylproline (omega=0). PPIases accelerate the folding of proteins. It catalyzes the cis-trans isomerization of proline imidic peptide bonds in oligopeptides. The sequence is that of Peptidyl-prolyl cis-trans isomerase CYP21-4 (CYP21-4) from Arabidopsis thaliana (Mouse-ear cress).